The chain runs to 473 residues: Bifunctional protein HldE (473 aa).

Positions 1 to 318 (MKLSMPRFDQ…RAIQREEGSE (318 aa)) are ribokinase. 194–197 (NLSE) is a binding site for ATP. D263 is an active-site residue. The interval 343 to 473 (FTNGCFDILH…TAIVEKIRKN (131 aa)) is cytidylyltransferase.

It in the N-terminal section; belongs to the carbohydrate kinase PfkB family. The protein in the C-terminal section; belongs to the cytidylyltransferase family. Homodimer.

It catalyses the reaction D-glycero-beta-D-manno-heptose 7-phosphate + ATP = D-glycero-beta-D-manno-heptose 1,7-bisphosphate + ADP + H(+). It carries out the reaction D-glycero-beta-D-manno-heptose 1-phosphate + ATP + H(+) = ADP-D-glycero-beta-D-manno-heptose + diphosphate. It participates in nucleotide-sugar biosynthesis; ADP-L-glycero-beta-D-manno-heptose biosynthesis; ADP-L-glycero-beta-D-manno-heptose from D-glycero-beta-D-manno-heptose 7-phosphate: step 1/4. It functions in the pathway nucleotide-sugar biosynthesis; ADP-L-glycero-beta-D-manno-heptose biosynthesis; ADP-L-glycero-beta-D-manno-heptose from D-glycero-beta-D-manno-heptose 7-phosphate: step 3/4. Functionally, catalyzes the phosphorylation of D-glycero-D-manno-heptose 7-phosphate at the C-1 position to selectively form D-glycero-beta-D-manno-heptose-1,7-bisphosphate. Its function is as follows. Catalyzes the ADP transfer from ATP to D-glycero-beta-D-manno-heptose 1-phosphate, yielding ADP-D-glycero-beta-D-manno-heptose. This is Bifunctional protein HldE from Pseudomonas putida (strain GB-1).